Consider the following 374-residue polypeptide: uncharacterized protein (374 aa).

A helical transmembrane segment spans residues 27–49 (AISPILALLIVLGVTIVVGAVFY).

It localises to the membrane. This is an uncharacterized protein from Methanocaldococcus jannaschii (strain ATCC 43067 / DSM 2661 / JAL-1 / JCM 10045 / NBRC 100440) (Methanococcus jannaschii).